The chain runs to 256 residues: Phosphonates import ATP-binding protein PhnC (256 aa).

The ABC transporter domain occupies 2–246; sequence LKVIQLDKTY…VLQHIYRQPD (245 aa). 35 to 42 contacts ATP; the sequence is GPSGAGKT.

It belongs to the ABC transporter superfamily. Phosphonates importer (TC 3.A.1.9.1) family. The complex is composed of two ATP-binding proteins (PhnC), two transmembrane proteins (PhnE) and a solute-binding protein (PhnD).

It localises to the cell membrane. It catalyses the reaction phosphonate(out) + ATP + H2O = phosphonate(in) + ADP + phosphate + H(+). Its function is as follows. Part of the ABC transporter complex PhnCDE involved in phosphonates import. Responsible for energy coupling to the transport system. The sequence is that of Phosphonates import ATP-binding protein PhnC from Lactiplantibacillus plantarum (strain ATCC BAA-793 / NCIMB 8826 / WCFS1) (Lactobacillus plantarum).